A 662-amino-acid polypeptide reads, in one-letter code: MSDLFSFNKEKKNKLVDNNYSAKDIEVLEGLEPVRKRPGMYIGGTDSNAMHHLVSEVLDNAMDEAVAGFASIITITMHHDHSITIFDNGRGIPIDNHPKFPDKSALEVILTTLHSGGKFSNNVYHTAGGLHGVGISVVNALSKHLEIKVYKQGKLYSQSYSKGEKLTDLICEEASKRLRGTSINFTPDPEIFSEKLHFNPKKIYELARSKAYLYRGVTIEWACEVEVQSDIPKKALISFPNGLKDYLSSKITLDNLVIPGIFAGNIESKSDRIKLEWAICWQNNDSSAFVQSYCNTVPTPQGGTHEQGLKSAILRGLKAYGEMIGNKKAANLTIEDILETASVVLSIFIAEPSFQGQTKEKLVSNGVSKPVENIIKDHFDHFLSSDKALATNLLEHVISIAEFRISKKNEKNISRKNATQKLRLPGKLADCTRTSPEGTELFIVEGDSAGGSAKQARNRETQAVLPLWGKVLNVASSTLEKIVNNQAIQDLEIALACGSLKNYKKENLRYEKIIIMTDADVDGAHIASLLMTFFFLRMPKLVEEGHLYLAKPPLYRLTQSNKTYYAGDEEEKAKLMDKLLKASKAKIEVGRFKGLGEMMPAQLKETTMHPEKRSLLKVTLADFQNVDKIVDDLMGKKPEKRFQFIYEQALVKMDKIISELDI.

ATP-binding positions include tyrosine 20, asparagine 60, aspartate 87, 129–135 (GLHGVGI), and lysine 359. The 115-residue stretch at 439-553 (TELFIVEGDS…EGHLYLAKPP (115 aa)) folds into the Toprim domain. Glutamate 445, aspartate 518, and aspartate 520 together coordinate Mg(2+).

Belongs to the type II topoisomerase family. ParE type 1 subfamily. In terms of assembly, heterotetramer composed of ParC and ParE. The cofactor is Mg(2+). Mn(2+) serves as cofactor. Ca(2+) is required as a cofactor.

It carries out the reaction ATP-dependent breakage, passage and rejoining of double-stranded DNA.. Topoisomerase IV is essential for chromosome segregation. It relaxes supercoiled DNA. Performs the decatenation events required during the replication of a circular DNA molecule. This is DNA topoisomerase 4 subunit B from Rickettsia conorii (strain ATCC VR-613 / Malish 7).